The sequence spans 466 residues: Argininosuccinate lyase (466 aa).

The protein belongs to the lyase 1 family. Argininosuccinate lyase subfamily.

Its subcellular location is the cytoplasm. The enzyme catalyses 2-(N(omega)-L-arginino)succinate = fumarate + L-arginine. Its pathway is amino-acid biosynthesis; L-arginine biosynthesis; L-arginine from L-ornithine and carbamoyl phosphate: step 3/3. The protein is Argininosuccinate lyase of Clostridium perfringens (strain ATCC 13124 / DSM 756 / JCM 1290 / NCIMB 6125 / NCTC 8237 / Type A).